A 151-amino-acid chain; its full sequence is Probable cGMP 3',5'-cyclic phosphodiesterase subunit delta (151 aa).

It belongs to the PDE6D/unc-119 family. Interacts with Pde6.

It localises to the nucleus. Its subcellular location is the cytoplasm. The chain is Probable cGMP 3',5'-cyclic phosphodiesterase subunit delta from Drosophila willistoni (Fruit fly).